Consider the following 280-residue polypeptide: Chlorophyll a-b binding protein CP29 (280 aa).

A disordered region spans residues 1–42; it reads MVFKFPTPPGTQKKAGTTATKPAPKATTKKVATSTGTRSGGV. N-acetylvaline is present on Val2. Thr7 carries the post-translational modification Phosphothreonine; in State 1 and State 2. A compositionally biased stretch (low complexity) spans 10–37; that stretch reads GTQKKAGTTATKPAPKATTKKVATSTGT. Thr17 is subject to Phosphothreonine; in State 2. Thr33 carries the post-translational modification Phosphothreonine; in State 1 and State 2. Tyr47 lines the chlorophyll b pocket. The chlorophyll a site is built by Phe73 and Ser79. A Phosphoserine; in State 2 modification is found at Ser103. Glu137 and His140 together coordinate chlorophyll a. 2 consecutive transmembrane segments (helical) span residues 143-163 and 176-196; these read WAML…VSWV and AGLS…ILVG. Chlorophyll b contacts are provided by Ser183, Glu199, and Arg202. Positions 238, 241, 243, and 255 each coordinate chlorophyll a. The chain crosses the membrane as a helical span at residues 244–264; the sequence is LAMVSFFGYGVQALSTGEGAL.

Belongs to the light-harvesting chlorophyll a/b-binding (LHC) protein family. As to quaternary structure, the LHC complex consists of chlorophyll a-b binding proteins. It depends on Binds at least 14 chlorophylls (8 Chl-a and 6 Chl-b) and carotenoids such as lutein and neoxanthin. as a cofactor. Post-translationally, reversible phosphorylation plays a role in the State transition process and determines the affinity of LHCII for PSI and PSII.

It localises to the plastid. The protein localises to the chloroplast thylakoid membrane. Functionally, the light-harvesting complex (LHC) functions as a light receptor, it captures and delivers excitation energy to photosystems with which it is closely associated. CP29 facilitates the State 1 to State 2 transition, where State I is induced by excess photosystem I (PSI) light and State 2 is induced by excess photosystem II (PSII) light. The sequence is that of Chlorophyll a-b binding protein CP29 from Chlamydomonas reinhardtii (Chlamydomonas smithii).